Here is a 194-residue protein sequence, read N- to C-terminus: A-type ATP synthase subunit E (194 aa).

Belongs to the V-ATPase E subunit family. As to quaternary structure, has multiple subunits with at least A(3), B(3), C, D, E, F, H, I and proteolipid K(x).

It localises to the cell membrane. Its function is as follows. Component of the A-type ATP synthase that produces ATP from ADP in the presence of a proton gradient across the membrane. This chain is A-type ATP synthase subunit E, found in Saccharolobus islandicus (strain M.16.27) (Sulfolobus islandicus).